A 196-amino-acid polypeptide reads, in one-letter code: Large ribosomal subunit protein bL25 (196 aa).

The interval 177-196 (VISIAPPKKDAEAETESAAG) is disordered.

The protein belongs to the bacterial ribosomal protein bL25 family. CTC subfamily. Part of the 50S ribosomal subunit; part of the 5S rRNA/L5/L18/L25 subcomplex. Contacts the 5S rRNA. Binds to the 5S rRNA independently of L5 and L18.

Functionally, this is one of the proteins that binds to the 5S RNA in the ribosome where it forms part of the central protuberance. This is Large ribosomal subunit protein bL25 from Chlorobium limicola (strain DSM 245 / NBRC 103803 / 6330).